We begin with the raw amino-acid sequence, 597 residues long: mRNA-capping enzyme (597 aa).

Residues 1 to 212 (MAYNKIPPRW…DEDGKKDSEP (212 aa)) form a TPase region. Residues 25–183 (LPLKTMLGPR…FRRYGDIEEA (159 aa)) form the Tyrosine-protein phosphatase domain. Catalysis depends on C126, which acts as the Phosphocysteine intermediate. Residues 181 to 221 (EEAPPPPVLPDWCFEDEDEEDEDEDGKKDSEPGSSASFSKR) form a disordered region. Residues 193–204 (CFEDEDEEDEDE) are compositionally biased toward acidic residues. Positions 229–597 (GAIFLEGITV…PPPKRLHRPT (369 aa)) are GTase. K294 acts as the N6-GMP-lysine intermediate in catalysis. GTP contacts are provided by residues R299, R315, 343-345 (DGE), 458-460 (KWK), and 528-533 (RQRIDK). Residues 330–386 (RKDLRMHLSNTLLDGEMIIDKVNGQAVPRYLIYDIIKFNAQPVGDCDFNIRLQCIER) form an interaction with POLR2A region. The interval 573-597 (KRKYPLDPDTELMPPPPPKRLHRPT) is disordered.

This sequence in the N-terminal section; belongs to the non-receptor class of the protein-tyrosine phosphatase family. In the C-terminal section; belongs to the eukaryotic GTase family. In terms of assembly, interacts with SUPT5H and RNMT. Interacts with POLR2A (via C-terminus); this enhances guanylyltransferase activity. Binds (via GTase domain) to the elongating phosphorylated form of RNA polymerase II; can form direct interactions with the phosphorylated POLR2A C-terminal domain and indirect interactions via bound RNA.

The protein localises to the nucleus. The enzyme catalyses a 5'-end triphospho-ribonucleoside in mRNA + H2O = a 5'-end diphospho-ribonucleoside in mRNA + phosphate + H(+). It catalyses the reaction a 5'-end diphospho-ribonucleoside in mRNA + GTP + H(+) = a 5'-end (5'-triphosphoguanosine)-ribonucleoside in mRNA + diphosphate. With respect to regulation, RNA triphosphatase activity is inhibited by vanadate, iodoacetate and magnesium. Functionally, bifunctional mRNA-capping enzyme exhibiting RNA 5'-triphosphate monophosphatase activity in the N-terminal part and mRNA guanylyltransferase activity in the C-terminal part. Catalyzes the first two steps of cap formation: by removing the gamma-phosphate from the 5'-triphosphate end of nascent mRNA to yield a diphosphate end, and by transferring the GMP moiety of GTP to the 5'-diphosphate terminus of RNA via a covalent enzyme-GMP reaction intermediate. The chain is mRNA-capping enzyme (Rngtt) from Mus musculus (Mouse).